The chain runs to 284 residues: Origin of replication complex subunit 6 (284 aa).

It belongs to the ORC6 family. In terms of assembly, component of the origin recognition complex (ORC) composed of at least ORC1 (ORC1A or ORC1B), ORC2, ORC3, ORC4, ORC5 and ORC6. ORC is regulated in a cell-cycle and development dependent manner. It is sequentially assembled at the exit from anaphase of mitosis and disassembled as cells enter S phase. Interacts directly with ORC2, ORC3, ORC4 and ORC5. Follow a cell-cycle regulation with a peak at the G1/S-phase. Mostly expressed in siliques, flowers, flower buds and mature leaves, and, to a lower exent, in roots, leaves and stems.

The protein resides in the nucleus. Its function is as follows. Component of the origin recognition complex (ORC) that binds origins of replication. DNA-binding is ATP-dependent. The specific DNA sequences that define origins of replication have not been identified yet. ORC is required to assemble the pre-replication complex necessary to initiate DNA replication. This Arabidopsis thaliana (Mouse-ear cress) protein is Origin of replication complex subunit 6.